A 414-amino-acid chain; its full sequence is Multidrug resistance protein MdtG (414 aa).

The next 10 membrane-spanning stretches (helical) occupy residues 14-34 (LFVT…IMPF), 56-76 (LVFS…GSLA), 89-109 (ALGM…WQFL), 113-133 (ALLG…ATQV), 144-164 (TLST…GLLA), 171-191 (PVFF…WFYV), 219-239 (ILSL…IAPI), 254-274 (LAFV…ISAP), 288-308 (ILIA…FVQT), and 376-396 (AVFC…YWCL).

It belongs to the major facilitator superfamily. DHA1 family. MdtG (TC 2.A.1.2.20) subfamily.

The protein resides in the cell inner membrane. The polypeptide is Multidrug resistance protein MdtG (Yersinia enterocolitica serotype O:8 / biotype 1B (strain NCTC 13174 / 8081)).